Consider the following 245-residue polypeptide: Carboxymethylenebutenolidase homolog (245 aa).

An N-acetylalanine modification is found at A2. Active-site residues include C132, D179, and H212. A Phosphoserine modification is found at S223.

This sequence belongs to the dienelactone hydrolase family.

The protein localises to the cytoplasm. The protein resides in the cytosol. Its function is as follows. Cysteine hydrolase. The protein is Carboxymethylenebutenolidase homolog (Cmbl) of Mus musculus (Mouse).